Here is a 430-residue protein sequence, read N- to C-terminus: MLDPNLLRNELDAVAEKLARRKFKLDVATLRQHEERRKVLQVETENLQAERNARSKAIGAAKSRGEDIEPLRREVNQLGERLSSAKTELDALQSEIRDYAFSLPNIPDDDVPDGRDENDNQEVSRWGEPRQYDFPIRDHVELGEIAGGLDFAAAVKLTGARFVVMRGQIARLHRALTQFMLDLHTEQHGYVEHYLPYLVNHASLYGTGQLPKFVEDLFHTQPLNEEADTSAYALIPTAEVPLTNLIRDEIIEEDALPLKMTAHTPCFRSEAGSYGRDTRGLIRMHQFDKVEMVQVVKPAQSMQALEEMTSHAEKVLQLLQLPYRKVLLCNGDMAFASCKTYDLEVWLPAQNTYREISSCSNISDFQARRMQARYRSRTDKKPQLVHTLNGSGLAVGRTLVAVLENHQLADGRIAIPAVLQPYMKGLTHIG.

The interval L103 to G127 is disordered. T237–E239 contacts L-serine. An ATP-binding site is contributed by R268–E270. E291 provides a ligand contact to L-serine. E355–S358 lines the ATP pocket. Residue S391 participates in L-serine binding.

The protein belongs to the class-II aminoacyl-tRNA synthetase family. Type-1 seryl-tRNA synthetase subfamily. In terms of assembly, homodimer. The tRNA molecule binds across the dimer.

Its subcellular location is the cytoplasm. The catalysed reaction is tRNA(Ser) + L-serine + ATP = L-seryl-tRNA(Ser) + AMP + diphosphate + H(+). It carries out the reaction tRNA(Sec) + L-serine + ATP = L-seryl-tRNA(Sec) + AMP + diphosphate + H(+). It participates in aminoacyl-tRNA biosynthesis; selenocysteinyl-tRNA(Sec) biosynthesis; L-seryl-tRNA(Sec) from L-serine and tRNA(Sec): step 1/1. Its function is as follows. Catalyzes the attachment of serine to tRNA(Ser). Is also able to aminoacylate tRNA(Sec) with serine, to form the misacylated tRNA L-seryl-tRNA(Sec), which will be further converted into selenocysteinyl-tRNA(Sec). The polypeptide is Serine--tRNA ligase (Sodalis glossinidius (strain morsitans)).